The following is a 149-amino-acid chain: Protein SprT-like (149 aa).

The SprT-like domain maps to 4–143 (TDYVKQVSLE…CGLCRGKLLL (140 aa)). Position 64 (His64) interacts with Zn(2+). The active site involves Glu65. His68 contributes to the Zn(2+) binding site.

This sequence belongs to the SprT family. It depends on Zn(2+) as a cofactor.

It is found in the cytoplasm. In Streptococcus pneumoniae (strain JJA), this protein is Protein SprT-like.